The following is an 853-amino-acid chain: G-type lectin S-receptor-like serine/threonine-protein kinase SRK (853 aa).

The N-terminal stretch at 1 to 31 (MRGELPNKHHSYTFFVFLFFFLILFPDLSIS) is a signal peptide. Topologically, residues 32 to 441 (VNTLSATESL…FGERRTIRGK (410 aa)) are extracellular. Residues 34–154 (TLSATESLTI…KINESDEFLW (121 aa)) form the Bulb-type lectin domain. 4 N-linked (GlcNAc...) asparagine glycosylation sites follow: asparagine 46, asparagine 120, asparagine 147, and asparagine 243. Residues 293 to 329 (PKDTCDLYGICGPYAYCDMSTSPTCNCIKGFQPLSPQ) form the EGF-like; atypical domain. 4 disulfide bridges follow: cysteine 297–cysteine 309, cysteine 303–cysteine 317, cysteine 378–cysteine 403, and cysteine 382–cysteine 388. Positions 348–428 (CGEDRFFRLM…DGQDLFVRLA (81 aa)) constitute a PAN domain. Asparagine 387 carries N-linked (GlcNAc...) asparagine glycosylation. Residues 442-462 (IIGLIIGISLMLVLSFIIYCF) form a helical membrane-spanning segment. At 463–853 (WKKKQKRARA…QITVSVINAR (391 aa)) the chain is on the cytoplasmic side. The Protein kinase domain maps to 524–802 (FSDSNILGRG…PKMSSVVLML (279 aa)). ATP-binding positions include 530–538 (LGRGGFGIV) and lysine 552. Position 558 is a phosphoserine (serine 558). Positions 613 to 631 (TQSSNKLNWQTRFSIINGI) are caM-binding. The active-site Proton acceptor is aspartate 650. Serine 654 and serine 667 each carry phosphoserine. Threonine 684 carries the post-translational modification Phosphothreonine. The interval 807–838 (GEIPQPKRPGYCVGRSSLDTADSSSSTKRDSE) is disordered. The span at 822-832 (SSLDTADSSSS) shows a compositional bias: low complexity. Position 831 is a phosphoserine (serine 831).

This sequence belongs to the protein kinase superfamily. Ser/Thr protein kinase family.

Its subcellular location is the cell membrane. The enzyme catalyses L-seryl-[protein] + ATP = O-phospho-L-seryl-[protein] + ADP + H(+). The catalysed reaction is L-threonyl-[protein] + ATP = O-phospho-L-threonyl-[protein] + ADP + H(+). In terms of biological role, female specificity determinant of self-incompatibility. The protein is G-type lectin S-receptor-like serine/threonine-protein kinase SRK (SRK) of Arabidopsis thaliana (Mouse-ear cress).